We begin with the raw amino-acid sequence, 624 residues long: tRNA uridine 5-carboxymethylaminomethyl modification enzyme MnmG (624 aa).

FAD is bound by residues 13–18 (GGGHAG), Val125, and Ser180. 273–287 (GPRYCPSIEDKIVRF) provides a ligand contact to NAD(+). Gln370 is a binding site for FAD.

Belongs to the MnmG family. Homodimer. Heterotetramer of two MnmE and two MnmG subunits. Requires FAD as cofactor.

The protein localises to the cytoplasm. Its function is as follows. NAD-binding protein involved in the addition of a carboxymethylaminomethyl (cmnm) group at the wobble position (U34) of certain tRNAs, forming tRNA-cmnm(5)s(2)U34. This Legionella pneumophila (strain Lens) protein is tRNA uridine 5-carboxymethylaminomethyl modification enzyme MnmG.